We begin with the raw amino-acid sequence, 284 residues long: MKQIEWKSYFNHTLGFLKYFGQRFNSDNTNITAGHLTYVSMLSLVPLLVVMFTVFSAFPMFDELKENLEQALFANLLPTSGEQLEEYLNEFVTNASKMTAIGVGFLFIVAIMLMSAIDKALNSIWRDSSSRHWLVSFAVYWMLLTLGPVLIGSGLAATSYLMSLSQFADEYVSGIQSFVLWFVPIVTSFVFFVLMYQLVPNRQVKFRYAAFGAVIAALLFELSKQLFSLYITFFPTYQAIYGALATIPILIVWIYLSWLIVLIGAVLTVSLEEYQLQQPEPKSD.

Helical transmembrane passes span 41–61, 98–118, 137–157, 178–198, 214–234, and 247–267; these read MLSL…FPMF, MTAI…SAID, FAVY…GLAA, FVLW…MYQL, VIAA…ITFF, and IPIL…GAVL.

This sequence belongs to the UPF0761 family.

The protein resides in the cell inner membrane. In Idiomarina loihiensis (strain ATCC BAA-735 / DSM 15497 / L2-TR), this protein is UPF0761 membrane protein IL2447.